A 95-amino-acid polypeptide reads, in one-letter code: Co-chaperonin GroES (95 aa).

It belongs to the GroES chaperonin family. Heptamer of 7 subunits arranged in a ring. Interacts with the chaperonin GroEL.

It is found in the cytoplasm. Its function is as follows. Together with the chaperonin GroEL, plays an essential role in assisting protein folding. The GroEL-GroES system forms a nano-cage that allows encapsulation of the non-native substrate proteins and provides a physical environment optimized to promote and accelerate protein folding. GroES binds to the apical surface of the GroEL ring, thereby capping the opening of the GroEL channel. The sequence is that of Co-chaperonin GroES from Nitratidesulfovibrio vulgaris (strain ATCC 29579 / DSM 644 / CCUG 34227 / NCIMB 8303 / VKM B-1760 / Hildenborough) (Desulfovibrio vulgaris).